We begin with the raw amino-acid sequence, 1248 residues long: Structural polyprotein (1248 aa).

The segment covering 1–10 (MEFIPTQTFY) has biased composition (polar residues). A disordered region spans residues 1 to 104 (MEFIPTQTFY…KKKKPGRRER (104 aa)). A compositionally biased stretch (low complexity) spans 22-44 (RPTIQVIRPRPRPQRQAGQLAQL). The segment at 36–68 (RQAGQLAQLISAVNKLTMRAVPQQKPRRNRKNK) is host transcription inhibition. Positions 60-72 (KPRRNRKNKKQKQ) are enriched in basic residues. The short motif at 61–99 (PRRNRKNKKQKQKQQAPQNNTNQKKQPPKKKPAQKKKKP) is the Nuclear localization signal element. Over residues 73-85 (KQQAPQNNTNQKK) the composition is skewed to low complexity. Residues 84 to 114 (KKQPPKKKPAQKKKKPGRRERMCMKIENDCI) form a binding to the viral RNA region. Over residues 86–101 (QPPKKKPAQKKKKPGR) the composition is skewed to basic residues. Positions 99-113 (PGRRERMCMKIENDC) are ribosome-binding. Cysteine 113 and cysteine 128 are disulfide-bonded. The Peptidase S3 domain maps to 113-261 (CIFEVKHEGK…KITPEGAEEW (149 aa)). Histidine 139 acts as the Charge relay system in catalysis. The Nuclear export signal motif lies at 144-154 (IDNADLAKLAF). The interaction with spike glycoprotein E2 stretch occupies residues 155–160 (KRSSKY). Aspartate 161 acts as the Charge relay system in catalysis. The interval 183–193 (PEGYYNWHHGA) is dimerization of the capsid protein. Serine 213 functions as the Charge relay system in the catalytic mechanism. Residues 219–223 (DNKGR) form a dimerization of the capsid protein region. Positions 262-274 (SLAIPVMCLLANT) are functions as an uncleaved signal peptide for the precursor of protein E3/E2. Residues 262 to 692 (SLAIPVMCLL…YYYELYPTMT (431 aa)) are Extracellular-facing. 9 disulfides stabilise this stretch: cysteine 269–cysteine 278, cysteine 283–cysteine 287, cysteine 286–cysteine 318, cysteine 344–cysteine 450, cysteine 347–cysteine 353, cysteine 416–cysteine 430, cysteine 478–cysteine 591, cysteine 526–cysteine 550, and cysteine 528–cysteine 545. Asparagine 273 is a glycosylation site (N-linked (GlcNAc...) asparagine; by host). 2 interaction with host Mxra8 receptor regions span residues 351–354 (HSCH) and 387–389 (HDW). Interaction with host Mxra8 receptor stretches follow at residues 509–512 (QSGN) and 541–547 (VINNCKV). N-linked (GlcNAc...) asparagine; by host glycans are attached at residues asparagine 588 and asparagine 670. A helical transmembrane segment spans residues 693–713 (VVVVSVASFILLSMVGMAVGM). The Cytoplasmic segment spans residues 714–748 (CMCARRRCITPYELTPGATVPFLLSLICCIRTAKA). An interaction with the capsid protein region spans residues 716–720 (CARRR). Residues cysteine 721, cysteine 741, and cysteine 742 are each lipidated (S-palmitoyl cysteine; by host). The tract at residues 721 to 741 (CITPYELTPGATVPFLLSLIC) is transient transmembrane before p62-6K protein processing. Cysteine 721 and cysteine 742 are oxidised to a cystine. At 749–763 (ATYQEAAVYLWNEQQ) the chain is on the extracellular side. Residues 764–784 (PLFWLQALIPLAALIVLCNCL) traverse the membrane as a helical segment. The Cytoplasmic segment spans residues 785–795 (RLLPCCCKTLA). Residues 796–816 (FLAVMSIGAHTVSAYEHVTVI) traverse the membrane as a helical segment. The Extracellular segment spans residues 817-1224 (PNTVGVPYKT…AMSWVQKITG (408 aa)). 4 disulfide bridges follow: cysteine 858/cysteine 923, cysteine 871/cysteine 903, cysteine 872/cysteine 905, and cysteine 877/cysteine 887. The E1 fusion peptide loop stretch occupies residues 893 to 910 (VYPFMWGGAYCFCDAENT). Residues asparagine 950 and asparagine 1079 are each glycosylated (N-linked (GlcNAc...) asparagine; by host). 4 cysteine pairs are disulfide-bonded: cysteine 1068–cysteine 1080, cysteine 1110–cysteine 1185, cysteine 1115–cysteine 1189, and cysteine 1137–cysteine 1179. A helical transmembrane segment spans residues 1225-1245 (GVGLVVAVAALILIVVLCVSF). Cysteine 1242 carries S-palmitoyl cysteine; by host lipidation. Cysteine 1242 carries S-stearoyl cysteine; by host lipidation. Residues 1246–1248 (SRH) lie on the Cytoplasmic side of the membrane.

The protein belongs to the alphavirus structural polyprotein family. As to quaternary structure, homodimer. Homomultimer. Interacts with host karyopherin KPNA4; this interaction allows the nuclear import of the viral capsid protein. Interacts with spike glycoprotein E2. Interacts with host IRAK1; the interaction leads to inhibition of IRAK1-dependent signaling. The precursor of protein E3/E2 and E1 form a heterodimer shortly after synthesis. In terms of assembly, interacts with spike glycoprotein E2. The precursor of protein E3/E2 and E1 form a heterodimer shortly after synthesis. Processing of the precursor of protein E3/E2 into E2 and E3 results in a heterodimer of the spike glycoproteins E2 and E1. Spike at virion surface are constituted of three E2-E1 heterodimers. After target cell attachment and endocytosis, E1 changes conformation to form homotrimers. Interacts with 6K protein. Interacts with host MXRA8; this interaction mediates virus entry. The interaction involves 2 adjacent E2-E1 heterodimers. As to quaternary structure, interacts with spike glycoprotein E1. Processing of the precursor of protein E3/E2 into E2 and E3 results in a heterodimer of the spike glycoproteins E2 and E1. Spike at virion surface are constituted of a trimer of E2-E1 heterodimers. Interacts with 6K protein. Interacts with host MXRA8; this interaction mediates virus entry. The interaction involves 2 adjacent E2-E1 heterodimers. Oligomer. Interacts with spike glycoprotein E1. Interacts with spike glycoprotein E2. Post-translationally, specific enzymatic cleavages in vivo yield mature proteins. Capsid protein is auto-cleaved during polyprotein translation, unmasking a signal peptide at the N-terminus of the precursor of E3/E2. The remaining polyprotein is then targeted to the host endoplasmic reticulum, where host signal peptidase cleaves it into pE2, 6K and E1 proteins. pE2 is further processed to mature E3 and E2 by host furin in trans-Golgi vesicle. In terms of processing, palmitoylated via thioester bonds. These palmitoylations may induce disruption of the C-terminus transmembrane. This would result in the reorientation of E2 C-terminus from lumenal to cytoplasmic side. N-glycosylated. Post-translationally, palmitoylated via thioester bonds.

It localises to the virion. The protein localises to the host cytoplasm. The protein resides in the host cell membrane. Its subcellular location is the host nucleus. It is found in the virion membrane. It localises to the host Golgi apparatus. The protein localises to the host trans-Golgi network. The protein resides in the host endoplasmic reticulum. The catalysed reaction is Autocatalytic release of the core protein from the N-terminus of the togavirus structural polyprotein by hydrolysis of a -Trp-|-Ser- bond.. Functionally, forms an icosahedral capsid with a T=4 symmetry composed of 240 copies of the capsid protein surrounded by a lipid membrane through which penetrate 80 spikes composed of trimers of E1-E2 heterodimers. The capsid protein binds to the viral RNA genome at a site adjacent to a ribosome binding site for viral genome translation following genome release. Possesses a protease activity that results in its autocatalytic cleavage from the nascent structural protein. Following its self-cleavage, the capsid protein transiently associates with ribosomes, and within several minutes the protein binds to viral RNA and rapidly assembles into icosahedric core particles. The resulting nucleocapsid eventually associates with the cytoplasmic domain of the spike glycoprotein E2 at the cell membrane, leading to budding and formation of mature virions. In case of infection, new virions attach to target cells and after clathrin-mediated endocytosis their membrane fuses with the host endosomal membrane. This leads to the release of the nucleocapsid into the cytoplasm, followed by an uncoating event necessary for the genomic RNA to become accessible. The uncoating might be triggered by the interaction of capsid proteins with ribosomes. Binding of ribosomes would release the genomic RNA since the same region is genomic RNA-binding and ribosome-binding. Specifically inhibits interleukin-1 receptor-associated kinase 1/IRAK1-dependent signaling during viral entry, representing a means by which the alphaviruses may evade innate immune detection and activation prior to viral gene expression. Degrades host cyclic GMP-AMP synthase (CGAS) thereby inhibiting the cGAS-STING pathway. Provides the signal sequence for the translocation of the precursor of protein E3/E2 to the host endoplasmic reticulum. Furin-cleaved E3 remains associated with spike glycoprotein E1 and mediates pH protection of the latter during the transport via the secretory pathway. After virion release from the host cell, the assembly protein E3 is gradually released in the extracellular space. In terms of biological role, plays a role in viral attachment to target host cell, by binding to the cell receptor MXRA8. Synthesized as a p62 precursor which is processed by furin at the cell membrane just before virion budding, giving rise to E2-E1 heterodimer. The p62-E1 heterodimer is stable, whereas E2-E1 is unstable and dissociate at low pH. p62 is processed at the last step, presumably to avoid E1 fusion activation before its final export to cell surface. E2 C-terminus contains a transitory transmembrane that would be disrupted by palmitoylation, resulting in reorientation of the C-terminal tail from lumenal to cytoplasmic side. This step is critical since E2 C-terminus is involved in budding by interacting with capsid proteins. This release of E2 C-terminus in cytoplasm occurs lately in protein export, and precludes premature assembly of particles at the endoplasmic reticulum membrane. Its function is as follows. Acts as a viroporin that participates in virus glycoprotein processing and transport to the plasma membrane, cell permeabilization and budding of viral particles. Disrupts the calcium homeostasis of the cell, probably at the endoplasmic reticulum level. This leads to cytoplasmic calcium elevation. Because of its lipophilic properties, the 6K protein is postulated to influence the selection of lipids that interact with the transmembrane domains of the glycoproteins, which, in turn, affects the deformability of the bilayer required for the extreme curvature that occurs as budding proceeds. Present in low amount in virions, about 3% compared to viral glycoproteins. Functionally, class II viral fusion protein. Fusion activity is inactive as long as E1 is bound to E2 in mature virion. After virus attachment to target cell and endocytosis, acidification of the endosome induce dissociation of E1/E2 heterodimer and concomitant trimerization of the E1 subunits. This E1 trimer is fusion active, and promotes release of viral nucleocapsid in cytoplasm after endosome and viral membrane fusion. Efficient fusion requires the presence of cholesterol and sphingolipid in the target membrane. This chain is Structural polyprotein, found in Chikungunya virus (strain S27-African prototype) (CHIKV).